Consider the following 237-residue polypeptide: UPF0688 protein C1orf174 homolog (237 aa).

The interval 1-187 (MRSRKLAGGV…LLDDDSNQPM (187 aa)) is disordered. Over residues 11–28 (RSSARLRARSCSAASASA) the composition is skewed to low complexity. A compositionally biased stretch (polar residues) spans 29–47 (QDTHVTTSAQTACQTPSSH). Over residues 48 to 76 (KATDRRTSKKFKYDKGHIVKSELQKHRSD) the composition is skewed to basic and acidic residues. Ser-183 carries the post-translational modification Phosphoserine.

Belongs to the UPF0688 family.

The protein resides in the nucleus. This is UPF0688 protein C1orf174 homolog from Bos taurus (Bovine).